A 328-amino-acid polypeptide reads, in one-letter code: CCAAT/enhancer-binding protein beta (328 aa).

Arg3 is modified (asymmetric dimethylarginine; by CARM1). Lys39 is subject to N6-methylated lysine. The segment at Asp165–Lys274 is disordered. Positions Ser200–Ala231 are enriched in low complexity. Thr220 carries the post-translational modification Phosphothreonine; by RPS6KA1, CDK2 and MAPK. Over residues Lys248–Asn264 the composition is skewed to basic and acidic residues. The bZIP domain maps to Ser254–Leu317. Residues Lys258 to Arg278 are basic motif. A leucine-zipper region spans residues Leu280–Leu287.

It belongs to the bZIP family. C/EBP subfamily. Binds DNA as a dimer. Interacts (not methylated) with MED23, MED26, SMARCA2, SMARCB1 and SMARCC1. Methylated. Methylation at Arg-3 by CARM1 and at Lys-39 by EHMT2, inhibit transactivation activity. Methylation is probably inhibited by phosphorylation at Thr-220. In terms of tissue distribution, specifically expressed in myelomoncytic cells.

Its subcellular location is the nucleus. In terms of biological role, important transcriptional activator regulating the expression of genes involved in immune and inflammatory responses. Binds to regulatory regions of several acute-phase and cytokines genes and probably plays a role in the regulation of acute-phase reaction, inflammation and hemopoiesis. The consensus recognition site is 5'-T[TG]NNGNAA[TG]-3'. Functions in brown adipose tissue (BAT) differentiation. Regulates the transcriptional induction of peroxisome proliferator-activated receptor gamma (PPARG). Binds to the MGF and MIM-1 promoters and activates the transcription of these genes. Its function is as follows. Important transcription factor regulating the expression of genes involved in immune and inflammatory responses. Also plays a significant role in adipogenesis, as well as in the gluconeogenic pathway, liver regeneration, and hematopoiesis. The consensus recognition site is 5'-T[TG]NNGNAA[TG]-3'. Its functional capacity is governed by protein interactions and post-translational protein modifications. The sequence is that of CCAAT/enhancer-binding protein beta (CEBPB) from Gallus gallus (Chicken).